The primary structure comprises 86 residues: Putative membrane protein insertion efficiency factor (86 aa).

Residues L67–H86 form a disordered region.

This sequence belongs to the UPF0161 family.

It is found in the cell inner membrane. In terms of biological role, could be involved in insertion of integral membrane proteins into the membrane. The protein is Putative membrane protein insertion efficiency factor of Photorhabdus laumondii subsp. laumondii (strain DSM 15139 / CIP 105565 / TT01) (Photorhabdus luminescens subsp. laumondii).